We begin with the raw amino-acid sequence, 143 residues long: Nucleoside diphosphate kinase (143 aa).

6 residues coordinate ATP: lysine 11, phenylalanine 59, arginine 87, threonine 93, arginine 104, and asparagine 114. The active-site Pros-phosphohistidine intermediate is histidine 117.

The protein belongs to the NDK family. In terms of assembly, homotetramer. The cofactor is Mg(2+).

The protein resides in the cytoplasm. The enzyme catalyses a 2'-deoxyribonucleoside 5'-diphosphate + ATP = a 2'-deoxyribonucleoside 5'-triphosphate + ADP. The catalysed reaction is a ribonucleoside 5'-diphosphate + ATP = a ribonucleoside 5'-triphosphate + ADP. Functionally, major role in the synthesis of nucleoside triphosphates other than ATP. The ATP gamma phosphate is transferred to the NDP beta phosphate via a ping-pong mechanism, using a phosphorylated active-site intermediate. The polypeptide is Nucleoside diphosphate kinase (Nitrosococcus oceani (strain ATCC 19707 / BCRC 17464 / JCM 30415 / NCIMB 11848 / C-107)).